The following is a 360-amino-acid chain: Flavin-dependent trigonelline monooxygenase, oxygenase component (360 aa).

This sequence belongs to the bacterial luciferase oxidoreductase family. In terms of assembly, homodimer. The trigonelline monooxygenase is composed of a reductase component TgnA and an oxygenase component TgnB.

The enzyme catalyses N-methylnicotinate + FMNH2 + O2 = (Z)-2-((N-methylformamido)methylene)-5-hydroxybutanolactone + FMN + H(+). It catalyses the reaction N-methylnicotinate + FADH2 + O2 = (Z)-2-((N-methylformamido)methylene)-5-hydroxybutanolactone + FAD + H(+). Involved in the degradation of the pyridine ring of trigonelline (TG; N-methylnicotinate) into succinate and methylamine as carbon and nitrogen sources, respectively. Catalyzes the insertion of two oxygens, followed by a ring cleavage of trigonelline to yield (Z)-2-((N-methylformamido)methylene)-5-hydroxybutyrolactone (MFMB). It is able to use reduced FMN or FAD. The chain is Flavin-dependent trigonelline monooxygenase, oxygenase component from Acinetobacter baylyi (strain ATCC 33305 / BD413 / ADP1).